Reading from the N-terminus, the 60-residue chain is Putative potassium channel blocker TXKS1 (60 aa).

Positions 1-28 (MNRLTTIILMLIVINVIMDDISESKVAA) are cleaved as a signal peptide. Disulfide bonds link cysteine 32–cysteine 49, cysteine 35–cysteine 55, and cysteine 39–cysteine 57. Lysine 59 is modified (lysine amide).

As to expression, expressed by the venom gland.

Its subcellular location is the secreted. Functionally, inhibits potassium channels. The chain is Putative potassium channel blocker TXKS1 from Olivierus martensii (Manchurian scorpion).